Here is a 207-residue protein sequence, read N- to C-terminus: Uracil phosphoribosyltransferase (207 aa).

5-phospho-alpha-D-ribose 1-diphosphate contacts are provided by residues Arg-77, Arg-102, and 129 to 137; that span reads DPMLATGGS. Uracil-binding positions include Ile-192 and 197 to 199; that span reads GDA. Residue Asp-198 participates in 5-phospho-alpha-D-ribose 1-diphosphate binding.

Belongs to the UPRTase family. The cofactor is Mg(2+).

It carries out the reaction UMP + diphosphate = 5-phospho-alpha-D-ribose 1-diphosphate + uracil. Its pathway is pyrimidine metabolism; UMP biosynthesis via salvage pathway; UMP from uracil: step 1/1. Allosterically activated by GTP. Catalyzes the conversion of uracil and 5-phospho-alpha-D-ribose 1-diphosphate (PRPP) to UMP and diphosphate. This is Uracil phosphoribosyltransferase from Dictyoglomus thermophilum (strain ATCC 35947 / DSM 3960 / H-6-12).